A 1037-amino-acid polypeptide reads, in one-letter code: Sodium/potassium exporting P-type ATPase cta3 (1037 aa).

At 1–61 (MVTINISNPV…GVSAWKVLLR (61 aa)) the chain is on the cytoplasmic side. Residues 62 to 82 (QVLNAMCVVLILAAALSFGTT) form a helical membrane-spanning segment. Position 83 (aspartate 83) is a topological domain, extracellular. Residues 84-104 (WIEGGVISAIIVLNITVGFIQ) traverse the membrane as a helical segment. Topologically, residues 105 to 281 (EYKAEKTMDS…LNVGTPLQRK (177 aa)) are cytoplasmic. A helical transmembrane segment spans residues 282 to 302 (LTVLAYILFCIAIILAIIVMA). At 303 to 313 (AHSFHVTNEVS) the chain is on the extracellular side. A helical membrane pass occupies residues 314–334 (IYAISLGISIIPESLIAVLSI). Residues 335-760 (TMAMGQKNMS…GRRMFDNIMR (426 aa)) are Cytoplasmic-facing. The active-site 4-aspartylphosphate intermediate is the aspartate 368. Mg(2+) is bound by residues aspartate 368 and threonine 370. Threonine 370, glutamate 468, lysine 520, arginine 559, threonine 620, glycine 621, aspartate 622, arginine 678, and lysine 684 together coordinate ATP. Aspartate 703 is a binding site for Mg(2+). Asparagine 706 provides a ligand contact to ATP. Residues 761–781 (FVLHLLVSNVGEVILLVVGLA) traverse the membrane as a helical segment. The Extracellular segment spans residues 782–787 (FRDEVH). The chain crosses the membrane as a helical span at residues 788–808 (LSVFPMSPVEILWCNMITSSF). Residues 809–844 (PSMGLGMELAQPDVMERLPHDNKVGIFQKSLIVDMM) lie on the Cytoplasmic side of the membrane. A helical transmembrane segment spans residues 845-865 (VYGFFLGVVSLMTWVVIMYGF). Topologically, residues 866-889 (GTGNLSYDCNAHYHAGCNDVFKAR) are extracellular. A glycan (N-linked (GlcNAc...) asparagine) is linked at asparagine 869. The helical transmembrane segment at 890–910 (SAVFAVVTFCILIMAVEVKNF) threads the bilayer. The Cytoplasmic segment spans residues 911–939 (DNSLFNLHGIPWGEWNFRYFLHTLVENKF). A helical membrane pass occupies residues 940–960 (LAWAIALAAVSVFPTIYIPVI). At 961-969 (NRDVFKHTY) the chain is on the extracellular side. A helical transmembrane segment spans residues 970–990 (IGWEWGVVAVAVMFYFFYVEI). At 991-1037 (WKSIRRSLTNPQKKGKFRRTLSNTITTESKLSEKDLEHRLFLQSRRA) the chain is on the cytoplasmic side. Phosphoserine is present on serine 1012.

Belongs to the cation transport ATPase (P-type) (TC 3.A.3) family. Type IID subfamily. It depends on Mg(2+) as a cofactor. In terms of processing, the active site is phosphorylated in presence of sodium or potassium and in conditions of higher pH. Not phosphorylated in presence of calcium ions.

It localises to the cell membrane. The catalysed reaction is Na(+)(in) + ATP + H2O = Na(+)(out) + ADP + phosphate + H(+). It carries out the reaction K(+)(in) + ATP + H2O = K(+)(out) + ADP + phosphate + H(+). In terms of biological role, catalyzes the hydrolysis of ATP coupled with the export of sodium and potassium from the cell. May export sodium less efficiently. May transport other cations such as lithium. Sodium/potassium efflux ATPases are involved in salt tolerance and maintaining the membrane potential across the plasma membrane in high salinity (Na+) or alkaline (K+) environments. The protein is Sodium/potassium exporting P-type ATPase cta3 of Schizosaccharomyces pombe (strain 972 / ATCC 24843) (Fission yeast).